We begin with the raw amino-acid sequence, 347 residues long: Integrin beta-1-binding protein 2 (347 aa).

Zn(2+) is bound by residues Cys-5, Cys-10, Cys-24, and His-27. The 60-residue stretch at 5–64 folds into the CHORD 1 domain; it reads CRNKGCGQHFDPNTNLPDSCCHHPGVPIFHDALKGWSCCRKRTVDFSEFLNIKGCTMGPH. Residues 28–31 carry the SH3-binding motif; sequence PGVP. Zn(2+)-binding residues include Cys-42, Cys-43, Cys-59, and His-64. The short motif at 70–78 is the SH3-binding element; that stretch reads PEAPQPEGP. Zn(2+)-binding residues include Cys-149 and Cys-154. One can recognise a CHORD 2 domain in the interval 149 to 208; it reads CQNPGCDAVYQGPESDATPCTYHPGAPRFHEGMKSWSCCGIQTLDFGAFLAQPGCRVGRH. An SH2-binding motif is present at residues 158–161; the sequence is YQGP. Residues Cys-168 and His-171 each coordinate Zn(2+). An SH3-binding motif is present at residues 172 to 175; that stretch reads PGAP. Zn(2+) contacts are provided by Cys-186, Cys-187, Cys-203, and His-208. The CS domain occupies 215–304; it reads PASCRHDWHQ…ADPGSWAQLE (90 aa). Positions 234–237 match the SH2-binding motif; the sequence is YGQI. Positions 319–347 are disordered; it reads LEMDEEESDDSDDDLSWTEEEEEEEAMGE. Positions 320 to 347 are enriched in acidic residues; the sequence is EMDEEESDDSDDDLSWTEEEEEEEAMGE.

As to quaternary structure, interacts with beta-1 integrin subunit. This interaction is regulated by divalent cations, and it occurs only in absence of calcium. In terms of tissue distribution, expressed in skeletal and cardiac muscles but not in other tissues.

In terms of biological role, may play a role during maturation and/or organization of muscles cells. In Homo sapiens (Human), this protein is Integrin beta-1-binding protein 2 (ITGB1BP2).